Reading from the N-terminus, the 216-residue chain is Probable transaldolase (216 aa).

K83 serves as the catalytic Schiff-base intermediate with substrate.

This sequence belongs to the transaldolase family. Type 3B subfamily.

The protein localises to the cytoplasm. The catalysed reaction is D-sedoheptulose 7-phosphate + D-glyceraldehyde 3-phosphate = D-erythrose 4-phosphate + beta-D-fructose 6-phosphate. It participates in carbohydrate degradation; pentose phosphate pathway; D-glyceraldehyde 3-phosphate and beta-D-fructose 6-phosphate from D-ribose 5-phosphate and D-xylulose 5-phosphate (non-oxidative stage): step 2/3. Its function is as follows. Transaldolase is important for the balance of metabolites in the pentose-phosphate pathway. The sequence is that of Probable transaldolase from Hyphomonas neptunium (strain ATCC 15444).